A 337-amino-acid polypeptide reads, in one-letter code: Ketol-acid reductoisomerase (NADP(+)) (337 aa).

Residues 3-183 form the KARI N-terminal Rossmann domain; it reads IDVFYDDDAD…GGGRAGVIPT (181 aa). Residues 26–29, Arg-49, Ser-52, Ser-54, and 84–87 each bind NADP(+); these read YGSQ and DTSQ. The active site involves His-109. Gly-135 contributes to the NADP(+) binding site. Residues 184–329 form the KARI C-terminal knotted domain; the sequence is TFEAETVTDL…EKLRDLMSWV (146 aa). 4 residues coordinate Mg(2+): Asp-192, Glu-196, Glu-228, and Glu-232. Residue Ser-253 participates in substrate binding.

This sequence belongs to the ketol-acid reductoisomerase family. Requires Mg(2+) as cofactor.

The catalysed reaction is (2R)-2,3-dihydroxy-3-methylbutanoate + NADP(+) = (2S)-2-acetolactate + NADPH + H(+). It catalyses the reaction (2R,3R)-2,3-dihydroxy-3-methylpentanoate + NADP(+) = (S)-2-ethyl-2-hydroxy-3-oxobutanoate + NADPH + H(+). Its pathway is amino-acid biosynthesis; L-isoleucine biosynthesis; L-isoleucine from 2-oxobutanoate: step 2/4. The protein operates within amino-acid biosynthesis; L-valine biosynthesis; L-valine from pyruvate: step 2/4. Functionally, involved in the biosynthesis of branched-chain amino acids (BCAA). Catalyzes an alkyl-migration followed by a ketol-acid reduction of (S)-2-acetolactate (S2AL) to yield (R)-2,3-dihydroxy-isovalerate. In the isomerase reaction, S2AL is rearranged via a Mg-dependent methyl migration to produce 3-hydroxy-3-methyl-2-ketobutyrate (HMKB). In the reductase reaction, this 2-ketoacid undergoes a metal-dependent reduction by NADPH to yield (R)-2,3-dihydroxy-isovalerate. The sequence is that of Ketol-acid reductoisomerase (NADP(+)) from Corynebacterium urealyticum (strain ATCC 43042 / DSM 7109).